The sequence spans 325 residues: GMP reductase (325 aa).

Catalysis depends on C174, which acts as the Thioimidate intermediate. 203-226 is an NADP(+) binding site; that stretch reads IIADGGIRTHGDIAKSVRFGATMV.

It belongs to the IMPDH/GMPR family. GuaC type 2 subfamily.

It carries out the reaction IMP + NH4(+) + NADP(+) = GMP + NADPH + 2 H(+). Its function is as follows. Catalyzes the irreversible NADPH-dependent deamination of GMP to IMP. It functions in the conversion of nucleobase, nucleoside and nucleotide derivatives of G to A nucleotides, and in maintaining the intracellular balance of A and G nucleotides. The chain is GMP reductase from Enterococcus faecalis (strain ATCC 700802 / V583).